Consider the following 952-residue polypeptide: Isoleucine--tRNA ligase (952 aa).

The short motif at 60–70 (PYANGSLHIGH) is the 'HIGH' region element. Residue glutamate 562 coordinates L-isoleucyl-5'-AMP. The 'KMSKS' region motif lies at 603–607 (KMSKS). Lysine 606 provides a ligand contact to ATP. The Zn(2+) site is built by cysteine 921, cysteine 924, cysteine 941, and cysteine 944.

The protein belongs to the class-I aminoacyl-tRNA synthetase family. IleS type 1 subfamily. As to quaternary structure, monomer. The cofactor is Zn(2+).

Its subcellular location is the cytoplasm. The catalysed reaction is tRNA(Ile) + L-isoleucine + ATP = L-isoleucyl-tRNA(Ile) + AMP + diphosphate. Catalyzes the attachment of isoleucine to tRNA(Ile). As IleRS can inadvertently accommodate and process structurally similar amino acids such as valine, to avoid such errors it has two additional distinct tRNA(Ile)-dependent editing activities. One activity is designated as 'pretransfer' editing and involves the hydrolysis of activated Val-AMP. The other activity is designated 'posttransfer' editing and involves deacylation of mischarged Val-tRNA(Ile). This is Isoleucine--tRNA ligase from Microcystis aeruginosa (strain NIES-843 / IAM M-2473).